Here is a 308-residue protein sequence, read N- to C-terminus: MKKQRRFQGQDIHGMLLLDKPVGISSNGALQRVKQIYQARKAGHTGSLDPLANGLLPICLGEATKLSGFLLEADKRYQVMCRLGVVTTTGDADGEVLETHPVNELDRDEVAKFLSGFSGPQEQVPPMYSAIKHQGQRLYKLARQGIEVERKSRQVTIHTIKLTELVNNELGFEVFCSKGTYIRTLAEDIGRALGCGAHVIALRRTQVGSFGASDMISLEELEMLAETNVEALGNLLLPVGQILADWPAVNLIADLAYYLRQGQSVRVPQAPSEGWVRLIECGKGFFGVGRITEDGRIAPRRLIFSQSG.

Residue Asp49 is the Nucleophile of the active site.

This sequence belongs to the pseudouridine synthase TruB family. Type 1 subfamily.

It catalyses the reaction uridine(55) in tRNA = pseudouridine(55) in tRNA. Functionally, responsible for synthesis of pseudouridine from uracil-55 in the psi GC loop of transfer RNAs. This Nitrosococcus oceani (strain ATCC 19707 / BCRC 17464 / JCM 30415 / NCIMB 11848 / C-107) protein is tRNA pseudouridine synthase B.